Consider the following 657-residue polypeptide: Threonine--tRNA ligase (657 aa).

One can recognise a TGS domain in the interval 1-61; sequence MINVTLPDGS…EGDASVAIIT (61 aa). Positions 244-549 are catalytic; the sequence is DHRKLGAQLD…LIENYAGSFP (306 aa). Residues cysteine 349, histidine 400, and histidine 526 each coordinate Zn(2+).

The protein belongs to the class-II aminoacyl-tRNA synthetase family. Homodimer. Zn(2+) is required as a cofactor.

It localises to the cytoplasm. The catalysed reaction is tRNA(Thr) + L-threonine + ATP = L-threonyl-tRNA(Thr) + AMP + diphosphate + H(+). Catalyzes the attachment of threonine to tRNA(Thr) in a two-step reaction: L-threonine is first activated by ATP to form Thr-AMP and then transferred to the acceptor end of tRNA(Thr). Also edits incorrectly charged L-seryl-tRNA(Thr). This is Threonine--tRNA ligase from Hyphomonas neptunium (strain ATCC 15444).